A 221-amino-acid chain; its full sequence is Transmembrane protein 267 (221 aa).

A run of 5 helical transmembrane segments spans residues 28–48 (ASAG…LPFI), 57–77 (LFDN…VIGL), 86–106 (VILA…MAGS), 121–141 (LHCS…MWAC), and 182–204 (ISYW…LMYL).

Its subcellular location is the membrane. This chain is Transmembrane protein 267 (tmem267), found in Danio rerio (Zebrafish).